A 34-amino-acid chain; its full sequence is SGSDGGVCPKILKKCRRDSDCPGACICRGNGYCG.

A cross-link (cyclopeptide (Ser-Gly)) is located at residues 1-34 (SGSDGGVCPKILKKCRRDSDCPGACICRGNGYCG). The (2-aminosuccinimidyl)acetic acid (Asp-Gly); alternate cross-link spans 4–5 (DG). Residues 4–5 (DG) constitute a cross-link (isoaspartyl glycine isopeptide (Asp-Gly); alternate). 3 cysteine pairs are disulfide-bonded: C8-C25, C15-C27, and C21-C33.

A cyclic succinimide probably forms by loss of water between Asp-4 and Gly-5, that can then rehydrate to either the original peptide bond or to a beta-aspartyl isopeptide bond. Three isoforms of MCoTI-II are detected, two with the parent molecular weight, corresponding to the unmodified and proposed isopeptide forms, and one with a molecular weight 18 Da lower, corresponding to a succinimide cross-linked form. In terms of processing, this is a cyclic peptide.

It is found in the secreted. Inhibits trypsin; probably participates in a plant defense mechanism. The polypeptide is Trypsin inhibitor 2 (Momordica cochinchinensis (Spiny bitter cucumber)).